The primary structure comprises 363 residues: NAD(P)H-quinone oxidoreductase subunit 1, chloroplastic (363 aa).

Helical transmembrane passes span 30 to 50 (LVPIVTLVLGITIGVLVIVWL), 98 to 118 (FSIGPSIAVISIFLSYSVIPF), 127 to 147 (LSIGVFFWIAISSIAPVGLLM), 165 to 185 (AAQSISYEIPLALCVLSISLL), 203 to 223 (FWGWNLWRQPIGFIVFLISSL), 248 to 268 (YSGIKFGLFYIASYLNLLVSS), 300 to 320 (VFGTLIGIFITLAKTYLFLFI), and 336 to 356 (LLNLGWKFLLPISLGNLLLTT).

This sequence belongs to the complex I subunit 1 family. As to quaternary structure, NDH is composed of at least 16 different subunits, 5 of which are encoded in the nucleus.

It is found in the plastid. It localises to the chloroplast thylakoid membrane. It carries out the reaction a plastoquinone + NADH + (n+1) H(+)(in) = a plastoquinol + NAD(+) + n H(+)(out). The enzyme catalyses a plastoquinone + NADPH + (n+1) H(+)(in) = a plastoquinol + NADP(+) + n H(+)(out). In terms of biological role, NDH shuttles electrons from NAD(P)H:plastoquinone, via FMN and iron-sulfur (Fe-S) centers, to quinones in the photosynthetic chain and possibly in a chloroplast respiratory chain. The immediate electron acceptor for the enzyme in this species is believed to be plastoquinone. Couples the redox reaction to proton translocation, and thus conserves the redox energy in a proton gradient. In Solanum bulbocastanum (Wild potato), this protein is NAD(P)H-quinone oxidoreductase subunit 1, chloroplastic.